Reading from the N-terminus, the 131-residue chain is Small ribosomal subunit protein uS8 (131 aa).

The protein belongs to the universal ribosomal protein uS8 family. Part of the 30S ribosomal subunit. Contacts proteins S5 and S12.

Functionally, one of the primary rRNA binding proteins, it binds directly to 16S rRNA central domain where it helps coordinate assembly of the platform of the 30S subunit. This chain is Small ribosomal subunit protein uS8, found in Paracidovorax citrulli (strain AAC00-1) (Acidovorax citrulli).